We begin with the raw amino-acid sequence, 649 residues long: Acetyl-coenzyme A synthetase (649 aa).

Residues R191 to R194, T311, and N335 contribute to the CoA site. ATP contacts are provided by residues G387–P389, D411–T416, D500, and R515. Residue S523 participates in CoA binding. Position 526 (R526) interacts with ATP. Mg(2+)-binding residues include V537, H539, and I542. Residue R584 participates in CoA binding. K609 is modified (N6-acetyllysine).

This sequence belongs to the ATP-dependent AMP-binding enzyme family. Requires Mg(2+) as cofactor. In terms of processing, acetylated. Deacetylation by the SIR2-homolog deacetylase activates the enzyme.

The catalysed reaction is acetate + ATP + CoA = acetyl-CoA + AMP + diphosphate. Catalyzes the conversion of acetate into acetyl-CoA (AcCoA), an essential intermediate at the junction of anabolic and catabolic pathways. AcsA undergoes a two-step reaction. In the first half reaction, AcsA combines acetate with ATP to form acetyl-adenylate (AcAMP) intermediate. In the second half reaction, it can then transfer the acetyl group from AcAMP to the sulfhydryl group of CoA, forming the product AcCoA. This chain is Acetyl-coenzyme A synthetase, found in Psychromonas ingrahamii (strain DSM 17664 / CCUG 51855 / 37).